Reading from the N-terminus, the 259-residue chain is MATRRALKAVLVDLSGTLHIEDAAVPGAQEALKRLRATSVMVRFVTNTTKESKQDLLERLKKLEFDISEDEIFTSLTAARNLVEQKQVRPMLLVDDRALPDFKGIQTSDPNAVVIGLAPEHFHYQILNQAFRLLLDGAPLIAIHKARYYKRKDGLALGPGPFVTALEYATDTKATVVGKPEKTFFLEALRGTGCEPEETVMIGDDCRDDVGGAQNAGMRGILVKTGKYRAADEDKINPAPYLTCESFPHAVDHILQHLL.

Mg(2+) contacts are provided by aspartate 13 and serine 15. Substrate is bound by residues 13–15 (DLS) and 46–47 (TN). A coiled-coil region spans residues 47–71 (NTTKESKQDLLERLKKLEFDISEDE). Lysine 50 bears the N6-succinyllysine mark. Lysine 179 is a binding site for substrate. Aspartate 204 is a binding site for Mg(2+).

Belongs to the HAD-like hydrolase superfamily. Mg(2+) serves as cofactor.

In Bos taurus (Bovine), this protein is Haloacid dehalogenase-like hydrolase domain-containing protein 2 (HDHD2).